The primary structure comprises 222 residues: V-type ATP synthase subunit D (222 aa).

This sequence belongs to the V-ATPase D subunit family.

Functionally, produces ATP from ADP in the presence of a proton gradient across the membrane. The polypeptide is V-type ATP synthase subunit D (Clostridioides difficile (strain 630) (Peptoclostridium difficile)).